Consider the following 339-residue polypeptide: Ketol-acid reductoisomerase (NADP(+)) (339 aa).

In terms of domain architecture, KARI N-terminal Rossmann spans 1–182 (MRVYYDRDAD…GGGRSGIIET (182 aa)). NADP(+) contacts are provided by residues 24–27 (YGSQ), Lys-48, Ser-51, Thr-53, and 83–86 (DELQ). His-108 is an active-site residue. Residue Gly-134 participates in NADP(+) binding. A KARI C-terminal knotted domain is found at 183 to 328 (TFQEECETDL…AKLRGMMPWI (146 aa)). Mg(2+) is bound by residues Asp-191, Glu-195, Glu-227, and Glu-231. Ser-252 is a binding site for substrate.

The protein belongs to the ketol-acid reductoisomerase family. Mg(2+) is required as a cofactor.

The enzyme catalyses (2R)-2,3-dihydroxy-3-methylbutanoate + NADP(+) = (2S)-2-acetolactate + NADPH + H(+). It catalyses the reaction (2R,3R)-2,3-dihydroxy-3-methylpentanoate + NADP(+) = (S)-2-ethyl-2-hydroxy-3-oxobutanoate + NADPH + H(+). It participates in amino-acid biosynthesis; L-isoleucine biosynthesis; L-isoleucine from 2-oxobutanoate: step 2/4. It functions in the pathway amino-acid biosynthesis; L-valine biosynthesis; L-valine from pyruvate: step 2/4. In terms of biological role, involved in the biosynthesis of branched-chain amino acids (BCAA). Catalyzes an alkyl-migration followed by a ketol-acid reduction of (S)-2-acetolactate (S2AL) to yield (R)-2,3-dihydroxy-isovalerate. In the isomerase reaction, S2AL is rearranged via a Mg-dependent methyl migration to produce 3-hydroxy-3-methyl-2-ketobutyrate (HMKB). In the reductase reaction, this 2-ketoacid undergoes a metal-dependent reduction by NADPH to yield (R)-2,3-dihydroxy-isovalerate. The sequence is that of Ketol-acid reductoisomerase (NADP(+)) from Allorhizobium ampelinum (strain ATCC BAA-846 / DSM 112012 / S4) (Agrobacterium vitis (strain S4)).